The following is a 450-amino-acid chain: Tubulin alpha chain (450 aa).

Position 11 (Gln-11) interacts with GTP. Lys-40 carries the post-translational modification N6-acetyllysine. The GTP site is built by Glu-71, Ser-140, Gly-144, Thr-145, Thr-179, Asn-206, and Asn-228. Glu-71 contributes to the Mg(2+) binding site. Residue Glu-254 is part of the active site.

This sequence belongs to the tubulin family. Dimer of alpha and beta chains. A typical microtubule is a hollow water-filled tube with an outer diameter of 25 nm and an inner diameter of 15 nM. Alpha-beta heterodimers associate head-to-tail to form protofilaments running lengthwise along the microtubule wall with the beta-tubulin subunit facing the microtubule plus end conferring a structural polarity. Microtubules usually have 13 protofilaments but different protofilament numbers can be found in some organisms and specialized cells. It depends on Mg(2+) as a cofactor. Post-translationally, acetylation of alpha chains at Lys-40 stabilizes microtubules and affects affinity and processivity of microtubule motors. This modification has a role in multiple cellular functions, ranging from cell motility, cell cycle progression or cell differentiation to intracellular trafficking and signaling.

Its subcellular location is the cytoplasm. It is found in the cytoskeleton. The catalysed reaction is GTP + H2O = GDP + phosphate + H(+). In terms of biological role, tubulin is the major constituent of microtubules, a cylinder consisting of laterally associated linear protofilaments composed of alpha- and beta-tubulin heterodimers. Microtubules grow by the addition of GTP-tubulin dimers to the microtubule end, where a stabilizing cap forms. Below the cap, tubulin dimers are in GDP-bound state, owing to GTPase activity of alpha-tubulin. The chain is Tubulin alpha chain from Euplotes vannus (Marine ciliate).